The following is a 407-amino-acid chain: L-amino-acid oxidase (407 aa).

C10 and C94 are disulfide-bonded. The N-linked (GlcNAc...) asparagine glycan is linked to N93. Substrate is bound at residue H144. V182 contributes to the FAD binding site. A disulfide bridge links C252 with C333. N282 carries an N-linked (GlcNAc...) asparagine glycan. Y293 provides a ligand contact to substrate. Residues E378 and 385–390 each bind FAD; that span reads GWIDST. 385–386 provides a ligand contact to substrate; that stretch reads GW.

The protein belongs to the flavin monoamine oxidase family. FIG1 subfamily. As to quaternary structure, homodimer; non-covalently linked. FAD serves as cofactor. Expressed by the venom gland.

It is found in the secreted. It catalyses the reaction an L-alpha-amino acid + O2 + H2O = a 2-oxocarboxylate + H2O2 + NH4(+). The enzyme catalyses L-leucine + O2 + H2O = 4-methyl-2-oxopentanoate + H2O2 + NH4(+). The catalysed reaction is L-phenylalanine + O2 + H2O = 3-phenylpyruvate + H2O2 + NH4(+). It carries out the reaction L-isoleucine + O2 + H2O = (S)-3-methyl-2-oxopentanoate + H2O2 + NH4(+). It catalyses the reaction L-aspartate + O2 + H2O = oxaloacetate + H2O2 + NH4(+). The enzyme catalyses L-lysine + O2 + H2O = 6-amino-2-oxohexanoate + H2O2 + NH4(+). The catalysed reaction is L-glutamate + O2 + H2O = H2O2 + 2-oxoglutarate + NH4(+). Functionally, catalyzes an oxidative deamination of predominantly hydrophobic and aromatic L-amino acids, thus producing hydrogen peroxide that may contribute to the diverse toxic effects of this enzyme. Is highly active on L-Leu followed by L-Phe and L-Ile, moderately active on L-Asp, L-Glu, and L-Lys, and not active on L-Pro, L-Asn, L-Gly, L-Ser and L-Cys. Exhibits diverse biological activities such as antibacterial activity (Minimal inhibitory concentrations (MIC) are 9.0 ug/ml against S.aureus, 144.0 ug/ml against P.aeruginosa and 288.0 ug/ml against E.coli) and inhibition of ADP- and TMVA-induced platelet aggregation. Effects of snake L-amino oxidases on platelets are controversial, since they either induce aggregation or inhibit agonist-induced aggregation. These different effects are probably due to different experimental conditions. Unlike other snake venom L-amino acid oxidases, does not induce hemorrhage. This protein may also induce hemolysis, edema, apoptosis and have antiparasitic activities. In Daboia siamensis (Eastern Russel's viper), this protein is L-amino-acid oxidase.